The primary structure comprises 434 residues: Probable exopolygalacturonase X (434 aa).

An N-terminal signal peptide occupies residues 1–23 (MKFLHTVAQTATLLLSLGASVEG). Residues 35 to 54 (HHPFRPLPASTPRTKTCHVR) are disordered. Residues asparagine 113, asparagine 129, and asparagine 199 are each glycosylated (N-linked (GlcNAc...) asparagine). One copy of the PbH1 1 repeat lies at 231-252 (SSNIVIQNSVVNNGDDCVSFKP). Aspartate 245 (proton donor) is an active-site residue. Cysteine 247 and cysteine 264 form a disulfide bridge. N-linked (GlcNAc...) asparagine glycans are attached at residues asparagine 253 and asparagine 265. The PbH1 2 repeat unit spans residues 254–274 (STDILVQNMHCNGSHGISVGS). Histidine 268 is a catalytic residue. 5 N-linked (GlcNAc...) asparagine glycosylation sites follow: asparagine 292, asparagine 297, asparagine 329, asparagine 354, and asparagine 364. The PbH1 3 repeat unit spans residues 327-348 (VSNITYDRMYIENVDWAIEVTQ). A PbH1 4 repeat occupies 362–394 (PSNLTISDVHIKNMWGTTSGKRDPNVGTIVCSS). Cysteine 392 and cysteine 398 form a disulfide bridge. N-linked (GlcNAc...) asparagine glycans are attached at residues asparagine 407 and asparagine 430.

Belongs to the glycosyl hydrolase 28 family.

The protein resides in the secreted. The catalysed reaction is [(1-&gt;4)-alpha-D-galacturonosyl](n) + H2O = alpha-D-galacturonate + [(1-&gt;4)-alpha-D-galacturonosyl](n-1). Its function is as follows. Specific in hydrolyzing the terminal glycosidic bond of polygalacturonic acid and oligogalacturonates. In Aspergillus terreus (strain NIH 2624 / FGSC A1156), this protein is Probable exopolygalacturonase X (pgaX).